We begin with the raw amino-acid sequence, 601 residues long: Protein FREE1 (601 aa).

Residues 1-240 (MQQGDYNSYY…SGEYPAFEDS (240 aa)) are disordered. Residues 21-35 (TPNPNPNPNPSPPAP) are compositionally biased toward pro residues. 2 stretches are compositionally biased toward polar residues: residues 63–79 (DYSN…QNSE) and 125–155 (LSSY…QHQT). A compositionally biased stretch (pro residues) spans 161–175 (APPPSSAPAPNPNPA). Positions 176–197 (PYSSSLYSAPPYSSGGSSIPPS) are enriched in low complexity. A compositionally biased stretch (basic and acidic residues) spans 214 to 231 (NRSRSDLGSDLYGKRSDS). Serine 218 carries the phosphoserine modification. The nuclear export signal stretch occupies residues 338–344 (LDGLRML). The FYVE-type zinc finger occupies 455 to 515 (DEAVSKCTSC…VCDRCMAEVS (61 aa)). Residues cysteine 461, cysteine 464, cysteine 477, cysteine 480, cysteine 485, cysteine 488, cysteine 507, and cysteine 510 each contribute to the Zn(2+) site. Residues 527-552 (RNVSLQSHEDLARKLQEEMERNRKSS) are a coiled coil. Residues serine 530 and serine 533 each carry the phosphoserine modification. Residues 542–561 (QEEMERNRKSSSGLREGSGR) form a disordered region.

Part of the ESCRT-I complex. Interacts with VPS23A and VPS23B, but not with VPS28 or VPS37. Interacts with IRT1. Interacts with SH3P2. Interacts with SH3P3, but not with SH3P1. Interacts (via N-terminus) with PYL4 and PYR3. Interacts (via C-terminus) with SNRK2D/SNRK2.2, SNRK2I/SNRK2.3, ABF4 and ABI5. Interacts with SINAT1, SINAT2, SINAT3 and SINAT4. Interacts with SINAT5. Component of a phosphoinositide 3-kinase (PI3K) complex containing ATG6, SH3P2 and FREE1. Post-translationally, phosphorylated at Ser-530 and Ser-533 by SNRK2D/SNRK2.2 and SNRK2I/SNRK2.3 in response to abscisic acid (ABA). Phosphorylation is necessary for ABA-induced FREE1 nuclear import. Ubiquitinated by SINAT1, SINAT2, SINAT3 and SINAT4 for subsequent proteasomal degradation. In terms of tissue distribution, ubiquitous. Lowest expression in mature seeds.

It localises to the cytoplasm. It is found in the prevacuolar compartment membrane. Its subcellular location is the late endosome. The protein resides in the endosome. The protein localises to the multivesicular body. It localises to the nucleus. Endosomal sorting complex required for transport (ESCRT) component regulating multivesicular body (MVB) protein sorting and plant growth. Required for the formation of intra-luminal vesicles (ILVs)in MVBs. Binds to phosphatidylinositol-3-phosphate (PI3P) and ubiquitin. Controls IRT1 recycling to the plasma membrane and impacts the polar delivery of this transporter to the outer plasma membrane domain. Regulates ubiquitin-dependent membrane protein degradation, vacuolar transport, autophagy, and vacuole biogenesis. ESCRT component that binds ubiquitin and regulates vacuolar sorting of proteins. Attenuates abscisic acid (ABA) signaling through RSL1-triggered degradation of the ABA receptors PYR1 and PYL4. Interacts with PYL4 and PYR1, and delivers the ubiquitinated ABA receptors as cargo to the vacuolar degradation pathway. In response to ABA, is phosphorylated by SnRK2 kinases which mediate FREE1 nuclear import. In the nucleus, interacts with the ABA-responsive transcription factors ABF4 and ABI5 to reduce their ability to bind to their cis-regulatory sequences of downstream genes, thus leading to transcriptional inhibition of ABA signaling pathway. Negatively regulates salt stress tolerance via a negative feedback loop involving ABA signaling pathway. This Arabidopsis thaliana (Mouse-ear cress) protein is Protein FREE1.